The sequence spans 350 residues: Kievitone hydratase (350 aa).

The N-terminal stretch at 1-19 (MMISSVLVAGVVAVSAALA) is a signal peptide.

In terms of assembly, homodimer. Glycosylated.

It is found in the secreted. The catalysed reaction is kievitone hydrate = kievitone + H2O. Converts fungitoxic kievitone to the less toxic kievitone hydrate, and thereby protects the pathogenic fungus against this phytoalexin. The protein is Kievitone hydratase (khs) of Fusarium solani subsp. phaseoli (Nectria haematococca).